We begin with the raw amino-acid sequence, 189 residues long: Probable DNA-directed RNA polymerase subunit delta (189 aa).

Residues 14–81 form the HTH HARE-type domain; the sequence is LSMIEVAHAI…GENVWALRTW (68 aa). Acidic residues-rich tracts occupy residues 90–100 and 118–189; these read EVDHPEDDGDE and EGDD…EDEE. Residues 90 to 189 form a disordered region; the sequence is EVDHPEDDGD…DDLDDDEDEE (100 aa).

This sequence belongs to the RpoE family. As to quaternary structure, RNAP is composed of a core of 2 alpha, a beta and a beta' subunits. The core is associated with a delta subunit and one of several sigma factors.

In terms of biological role, participates in both the initiation and recycling phases of transcription. In the presence of the delta subunit, RNAP displays an increased specificity of transcription, a decreased affinity for nucleic acids, and an increased efficiency of RNA synthesis because of enhanced recycling. This Lactobacillus delbrueckii subsp. bulgaricus (strain ATCC BAA-365 / Lb-18) protein is Probable DNA-directed RNA polymerase subunit delta.